Reading from the N-terminus, the 465-residue chain is Ribulose bisphosphate carboxylase large chain (465 aa).

N6,N6,N6-trimethyllysine is present on Lys4. Positions 113 and 163 each coordinate substrate. The active-site Proton acceptor is Lys165. Lys167 contributes to the substrate binding site. The Mg(2+) site is built by Lys191, Asp193, and Glu194. At Lys191 the chain carries N6-carboxylysine. His284 functions as the Proton acceptor in the catalytic mechanism. Substrate contacts are provided by Arg285, His317, and Ser369.

It belongs to the RuBisCO large chain family. Type I subfamily. As to quaternary structure, heterohexadecamer of 8 large chains and 8 small chains; disulfide-linked. The disulfide link is formed within the large subunit homodimers. The cofactor is Mg(2+). Post-translationally, the disulfide bond which can form in the large chain dimeric partners within the hexadecamer appears to be associated with oxidative stress and protein turnover.

It is found in the plastid. The protein localises to the chloroplast. The catalysed reaction is 2 (2R)-3-phosphoglycerate + 2 H(+) = D-ribulose 1,5-bisphosphate + CO2 + H2O. The enzyme catalyses D-ribulose 1,5-bisphosphate + O2 = 2-phosphoglycolate + (2R)-3-phosphoglycerate + 2 H(+). Its function is as follows. RuBisCO catalyzes two reactions: the carboxylation of D-ribulose 1,5-bisphosphate, the primary event in carbon dioxide fixation, as well as the oxidative fragmentation of the pentose substrate in the photorespiration process. Both reactions occur simultaneously and in competition at the same active site. In Ilex crenata (Japanese holly), this protein is Ribulose bisphosphate carboxylase large chain.